The sequence spans 164 residues: FMN reductase (NADH) RutF (164 aa).

It belongs to the non-flavoprotein flavin reductase family. RutF subfamily.

The catalysed reaction is FMNH2 + NAD(+) = FMN + NADH + 2 H(+). Catalyzes the reduction of FMN to FMNH2 which is used to reduce pyrimidine by RutA via the Rut pathway. The sequence is that of FMN reductase (NADH) RutF from Klebsiella pneumoniae subsp. pneumoniae (strain ATCC 700721 / MGH 78578).